Consider the following 172-residue polypeptide: uncharacterized protein (172 aa).

Belongs to the archaeal NMN adenylyltransferase family.

This is an uncharacterized protein from Aeropyrum pernix (strain ATCC 700893 / DSM 11879 / JCM 9820 / NBRC 100138 / K1).